Here is a 555-residue protein sequence, read N- to C-terminus: Poly(A) polymerase PAPa (555 aa).

Positions 1 to 20 (MNNQAYGVTPPISVANSTPK) are disordered. Residues 86 to 88 (FGS), 99 to 101 (DID), D153, K214, Y223, and 232 to 233 (GV) each bind ATP. Mg(2+)-binding residues include D99, D101, and D153. The disordered stretch occupies residues 532–555 (KRKRAVSKNEGKKKPKSVGTVSAA).

The protein belongs to the poly(A) polymerase family. Mg(2+) serves as cofactor. Requires Mn(2+) as cofactor.

Its subcellular location is the nucleus. It carries out the reaction RNA(n) + ATP = RNA(n)-3'-adenine ribonucleotide + diphosphate. Its function is as follows. Polymerase that creates the 3'-poly(A) tail of mRNA's. May acquire specificity through interaction with a cleavage and polyadenylation factor. The polypeptide is Poly(A) polymerase PAPa (PAPA) (Candida albicans (strain SC5314 / ATCC MYA-2876) (Yeast)).